The primary structure comprises 1411 residues: Uveal autoantigen with coiled-coil domains and ankyrin repeats (1411 aa).

An N-acetylmethionine modification is found at methionine 1. Residues 1–30 form a disordered region; it reads MKSLKSRLWKQDAPGPTSPSSPTAVASTQS. Positions 13 to 30 are enriched in low complexity; it reads APGPTSPSSPTAVASTQS. ANK repeat units lie at residues 69-98, 102-131, 135-164, 168-197, 201-230, and 234-263; these read EGRSAFHVVASKGNLECLNAILTHGIDVAT, AGRNALHLAAKYGHALCLQKLLQYNCPTEH, QGRTALHDAVMADCPSSIQLLCDHGASVNA, DGRTPLVLATQMCRPTICQLLIDRGADVNS, QNRTALMLGCEYGCRDAVEVLVKNGADLTL, and LGHDSSYYARIGDNLDILNLLKTASENTNK. A disordered region spans residues 263 to 301; the sequence is KGRELWRKGPPLQQRNLSHTQDEGSVKSTQREQREPHSF. Phosphoserine is present on serine 280. Basic and acidic residues predominate over residues 282-301; it reads TQDEGSVKSTQREQREPHSF. Coiled-coil stretches lie at residues 299–379, 442–624, and 652–1380; these read HSFQ…NRFK, SENE…LKEL, and VKRL…AIYR. A disordered region spans residues 1006–1031; it reads GLKEQLSEQTHKCRQRDEEVKKGKQE.

Component of the apoptosome complex, composed of APAF1, pro-caspase-9 and UACA. In the complex, it probably interacts directly with APAF1. Interacts with LGALS3, ARF6 and ACTB. Interacts with RAB39A. Highly expressed in heart, liver, kidney and testis. Weakly expressed in lung and skeletal muscle. Not expressed in brain and spleen.

It is found in the nucleus. The protein localises to the cytoplasm. The protein resides in the cytoskeleton. Its function is as follows. Regulates APAF1 expression and plays an important role in the regulation of stress-induced apoptosis. Promotes apoptosis by regulating three pathways, apoptosome up-regulation, LGALS3/galectin-3 down-regulation and NF-kappa-B inactivation. Regulates the redistribution of APAF1 into the nucleus after proapoptotic stress. Down-regulates the expression of LGALS3 by inhibiting NFKB1. In terms of biological role, modulates isoactin dynamics to regulate the morphological alterations required for cell growth and motility. Interaction with ARF6 may modulate cell shape and motility after injury. May be involved in multiple neurite formation. This chain is Uveal autoantigen with coiled-coil domains and ankyrin repeats (Uaca), found in Mus musculus (Mouse).